The following is a 279-amino-acid chain: Proline-rich protein 23D1 (279 aa).

Disordered stretches follow at residues 1–60 (MYGY…PHLN) and 247–270 (LRPM…RPPS). Polar residues predominate over residues 15 to 33 (TEPQNDNEGETSLATTQMN).

The protein belongs to the PRR23 family.

The sequence is that of Proline-rich protein 23D1 (PRR23D1) from Homo sapiens (Human).